The following is a 467-amino-acid chain: Peroxisome proliferator-activated receptor alpha (467 aa).

Positions 99-173 form a DNA-binding region, nuclear receptor; sequence NIECRICGDK…VGMSHNAIRF (75 aa). NR C4-type zinc fingers lie at residues 102–122 and 139–161; these read CRIC…CEGC and CDRS…FHKC. Residues 239-466 form the NR LBD domain; that stretch reads FVIHDMETLC…PLLQEIYRDM (228 aa). A required for heterodimerization with RXRA region spans residues 304–433; the sequence is DQVTLLKYGV…PKLLQKLADL (130 aa).

The protein belongs to the nuclear hormone receptor family. NR1 subfamily. In terms of assembly, heterodimer; with RXRA. This heterodimerization is required for DNA binding and transactivation activity. Interacts with NCOA3 coactivator. Interacts with CITED2; the interaction stimulates its transcriptional activity. Also interacts with PPARBP in vitro. Interacts with AKAP13, LPIN1, PRDM16 and coactivator NCOA6. Interacts with ASXL1 and ASXL2. Interacts with PER2. Interacts with SIRT1; the interaction seems to be modulated by NAD(+) levels. Interacts with CRY1 and CRY2. In hepatocytes, interacts with PAQR3 and HUWE1; the interactions promote PPARA poylubiquitination and HUWE1-mediated degradation. Post-translationally, ubiquitinated by E3 ubiquitin-protein ligase HUWE1; leading to proteasomal degradation. Phosphorylated.

It is found in the nucleus. Its function is as follows. Ligand-activated transcription factor. Key regulator of lipid metabolism. Activated by the endogenous ligand 1-palmitoyl-2-oleoyl-sn-glycerol-3-phosphocholine (16:0/18:1-GPC). Activated by oleylethanolamide, a naturally occurring lipid that regulates satiety. Receptor for peroxisome proliferators such as hypolipidemic drugs and fatty acids. Regulates the peroxisomal beta-oxidation pathway of fatty acids. Functions as a transcription activator for the ACOX1 and P450 genes. Transactivation activity requires heterodimerization with RXRA and is antagonized by NR2C2. May be required for the propagation of clock information to metabolic pathways regulated by PER2. The sequence is that of Peroxisome proliferator-activated receptor alpha (PPARA) from Cavia porcellus (Guinea pig).